The chain runs to 424 residues: CinA-like protein (424 aa).

The protein belongs to the CinA family.

The protein is CinA-like protein of Shewanella woodyi (strain ATCC 51908 / MS32).